A 620-amino-acid polypeptide reads, in one-letter code: Chaperone protein HscA homolog (620 aa).

Belongs to the heat shock protein 70 family.

Chaperone involved in the maturation of iron-sulfur cluster-containing proteins. Has a low intrinsic ATPase activity which is markedly stimulated by HscB. This Pseudomonas savastanoi pv. phaseolicola (strain 1448A / Race 6) (Pseudomonas syringae pv. phaseolicola (strain 1448A / Race 6)) protein is Chaperone protein HscA homolog.